The sequence spans 795 residues: Lon protease (795 aa).

The region spanning 7-213 (SQILVVRGQV…KIIQAGIEDL (207 aa)) is the Lon N-terminal domain. 379 to 386 (GPPGVGKS) is a binding site for ATP. One can recognise a Lon proteolytic domain in the interval 615-795 (VSLPGIVNGM…YSDIYNKLFS (181 aa)). Residues Ser702 and Lys745 contribute to the active site.

It belongs to the peptidase S16 family. As to quaternary structure, homohexamer. Organized in a ring with a central cavity.

It localises to the cytoplasm. The enzyme catalyses Hydrolysis of proteins in presence of ATP.. Functionally, ATP-dependent serine protease that mediates the selective degradation of mutant and abnormal proteins as well as certain short-lived regulatory proteins. Required for cellular homeostasis and for survival from DNA damage and developmental changes induced by stress. Degrades polypeptides processively to yield small peptide fragments that are 5 to 10 amino acids long. Binds to DNA in a double-stranded, site-specific manner. The sequence is that of Lon protease from Mycoplasma genitalium (strain ATCC 33530 / DSM 19775 / NCTC 10195 / G37) (Mycoplasmoides genitalium).